A 36-amino-acid polypeptide reads, in one-letter code: Defensin-like turtle egg white protein TEWP (36 aa).

Gln1 is modified (pyrrolidone carboxylic acid). Disulfide bonds link Cys4-Cys30, Cys8-Cys29, and Cys12-Cys24.

The protein belongs to the beta-defensin family. In terms of assembly, monomer. In terms of tissue distribution, detected in egg white (at protein level).

It localises to the secreted. In terms of biological role, antibacterial and antiviral peptide. Has strong inhibitory activity towards E.coli and S.typhimurium. Has significant antiviral activity against Chandipura virus. This chain is Defensin-like turtle egg white protein TEWP, found in Caretta caretta (Loggerhead sea turtle).